Here is a 399-residue protein sequence, read N- to C-terminus: Dual-specificity RNA methyltransferase RlmN (399 aa).

Glutamate 122 serves as the catalytic Proton acceptor. Residues 128 to 371 (ETDRGTLCVS…VRTPRGRDIL (244 aa)) form the Radical SAM core domain. Cysteines 135 and 374 form a disulfide. Residues cysteine 142, cysteine 146, and cysteine 149 each contribute to the [4Fe-4S] cluster site. Residues 200–201 (GE), serine 232, 254–256 (SLH), and asparagine 331 contribute to the S-adenosyl-L-methionine site. Cysteine 374 acts as the S-methylcysteine intermediate in catalysis.

This sequence belongs to the radical SAM superfamily. RlmN family. [4Fe-4S] cluster is required as a cofactor.

The protein localises to the cytoplasm. It catalyses the reaction adenosine(2503) in 23S rRNA + 2 reduced [2Fe-2S]-[ferredoxin] + 2 S-adenosyl-L-methionine = 2-methyladenosine(2503) in 23S rRNA + 5'-deoxyadenosine + L-methionine + 2 oxidized [2Fe-2S]-[ferredoxin] + S-adenosyl-L-homocysteine. The catalysed reaction is adenosine(37) in tRNA + 2 reduced [2Fe-2S]-[ferredoxin] + 2 S-adenosyl-L-methionine = 2-methyladenosine(37) in tRNA + 5'-deoxyadenosine + L-methionine + 2 oxidized [2Fe-2S]-[ferredoxin] + S-adenosyl-L-homocysteine. Functionally, specifically methylates position 2 of adenine 2503 in 23S rRNA and position 2 of adenine 37 in tRNAs. m2A2503 modification seems to play a crucial role in the proofreading step occurring at the peptidyl transferase center and thus would serve to optimize ribosomal fidelity. This Rhodopseudomonas palustris (strain TIE-1) protein is Dual-specificity RNA methyltransferase RlmN.